Consider the following 155-residue polypeptide: Protein-export protein SecB (155 aa).

Belongs to the SecB family. In terms of assembly, homotetramer, a dimer of dimers. One homotetramer interacts with 1 SecA dimer.

The protein localises to the cytoplasm. Functionally, one of the proteins required for the normal export of preproteins out of the cell cytoplasm. It is a molecular chaperone that binds to a subset of precursor proteins, maintaining them in a translocation-competent state. It also specifically binds to its receptor SecA. This is Protein-export protein SecB from Escherichia coli O139:H28 (strain E24377A / ETEC).